Here is an 89-residue protein sequence, read N- to C-terminus: Small ribosomal subunit protein uS15 (89 aa).

Belongs to the universal ribosomal protein uS15 family. As to quaternary structure, part of the 30S ribosomal subunit. Forms a bridge to the 50S subunit in the 70S ribosome, contacting the 23S rRNA.

One of the primary rRNA binding proteins, it binds directly to 16S rRNA where it helps nucleate assembly of the platform of the 30S subunit by binding and bridging several RNA helices of the 16S rRNA. In terms of biological role, forms an intersubunit bridge (bridge B4) with the 23S rRNA of the 50S subunit in the ribosome. The chain is Small ribosomal subunit protein uS15 from Pelodictyon phaeoclathratiforme (strain DSM 5477 / BU-1).